The chain runs to 118 residues: Large ribosomal subunit protein uL24 (118 aa).

This sequence belongs to the universal ribosomal protein uL24 family. Part of the 50S ribosomal subunit.

In terms of biological role, one of two assembly initiator proteins, it binds directly to the 5'-end of the 23S rRNA, where it nucleates assembly of the 50S subunit. Functionally, one of the proteins that surrounds the polypeptide exit tunnel on the outside of the subunit. The chain is Large ribosomal subunit protein uL24 from Synechococcus sp. (strain WH7803).